The primary structure comprises 823 residues: MDIKLDPSRDDLPLMANTSHMLVKHYILDLDVDFGNQVIEGNIVLFFGDGNRFKNQSRSTQETFQMESEEADIFRTAEPCHVPEMDSSTFSPKMGHRECAVCGKGDQDAFDNDGNHDNQERDSEISSSKYCCDTGNHGKRDFLLVLDCCDLSVLKVEEVDVAAVPGLEKFTKAPKLLATPEKLRCEIVRDLVALPADAWREQLDCYTRCSQAPGCGELLIDSDNWSLRIRKTGTSTPADFPRAIRIWYKTKPEGQSVAWTTDQNGRPCVYTMGSPINNRALFPCQEPPVAMSTWQATVRAAASFVVLMSGENSAKPTPLREGYMSWHYYVTMPMPASTFAIAVGCWTEMKPKASPPDDLMTEHSLPLSPSEADLRYDNTCNHMEYPCRFQSASAASQDIIPYRVFAPVCLEGACQEALLWLIPSCLSAAHSVLGTHPFSRLDILIVPTNFPSLGMASPHIIFLSQSTLTGTSHLCGTRLCHEIAHSWFGLAIGARDWTEEWLSEGFATHLEDIFWAEAQQLPPHEALEQQELRACLRWHRLQDELRNSPEGMQVLRPNKEETGHVSASGASVVKHGLNPEKGFMQVHYLKGYFLLRFLTRTLGEKIYFPFLRKFVHLFHGQLILSQDFLQMLLENIPENKRLGLSVENIVRDWLECSGIPKALQEERKAEDCSPSRLARQVGSEVAKWIRVNRRPRKRKRGKREVAFEKLSPDQIVLLLEWLLEQKTLSPQTLHCLQQTYHLPEQDAEVRHRWCELVIKHKYTKAYNQVERFLLEDQAMGIYLYGELMVSEDARLQQLAHRCFELVKEHMDRASAQVVTEMLF.

Zn(2+) is bound at residue His-481. The active-site Proton acceptor is Glu-482. 2 residues coordinate Zn(2+): His-485 and Glu-504. The short motif at Arg-693–Arg-703 is the Nucleolar localization signal element.

It belongs to the peptidase M1 family. Zn(2+) serves as cofactor. As to expression, expressed in testis, heart, brain, lung, liver, skeletal muscle, kidney and ovary. Expressed in vascular tissues.

It is found in the nucleus. It localises to the nucleolus. The protein resides in the cytoplasm. Aminopeptidase which catalyzes the hydrolysis of amino acid residues from the N-terminus of peptide or protein substrates. The chain is Aminopeptidase O (Aopep) from Mus musculus (Mouse).